The following is a 249-amino-acid chain: NADH dehydrogenase [ubiquinone] flavoprotein 2, mitochondrial (249 aa).

The N-terminal 32 residues, M1–N32, are a transit peptide targeting the mitochondrion. K61 is modified (N6-acetyllysine). [2Fe-2S] cluster contacts are provided by C135, C140, C176, and C180. Y193 bears the Phosphotyrosine; by SRC mark. The segment at I213–L249 is disordered.

The protein belongs to the complex I 24 kDa subunit family. As to quaternary structure, core subunit of respiratory chain NADH dehydrogenase (Complex I) which is composed of 45 different subunits. This is a component of the flavoprotein-sulfur (FP) fragment of the enzyme. [2Fe-2S] cluster serves as cofactor.

The protein resides in the mitochondrion inner membrane. It catalyses the reaction a ubiquinone + NADH + 5 H(+)(in) = a ubiquinol + NAD(+) + 4 H(+)(out). Functionally, core subunit of the mitochondrial membrane respiratory chain NADH dehydrogenase (Complex I) which catalyzes electron transfer from NADH through the respiratory chain, using ubiquinone as an electron acceptor. Parts of the peripheral arm of the enzyme, where the electrons from NADH are accepted by flavin mononucleotide (FMN) and then passed along a chain of iron-sulfur clusters by electron tunnelling to the final acceptor ubiquinone. Contains one iron-sulfur cluster. The protein is NADH dehydrogenase [ubiquinone] flavoprotein 2, mitochondrial of Gorilla gorilla gorilla (Western lowland gorilla).